Reading from the N-terminus, the 280-residue chain is uncharacterized protein (280 aa).

The signal sequence occupies residues 1-21; sequence MRPVIKVGLSTASVYPLRAEA.

It to M.tuberculosis Rv0498 and S.coelicolor SCO3347.

This is an uncharacterized protein from Mycobacterium leprae (strain TN).